Reading from the N-terminus, the 498-residue chain is Isoflavone 2'-hydroxylase (498 aa).

Residues Ile3–Leu23 form a helical membrane-spanning segment. Cys436 serves as a coordination point for heme.

Belongs to the cytochrome P450 family. It depends on heme as a cofactor. As to expression, expressed constitutively in roots, but present at very low levels in uninfected stems and leaves.

Its subcellular location is the endoplasmic reticulum membrane. The enzyme catalyses formononetin + reduced [NADPH--hemoprotein reductase] + O2 = 2'-hydroxyformononetin + oxidized [NADPH--hemoprotein reductase] + H2O + H(+). Involved in the biosynthesis of the pterocarpin phytoalexins. Acts on isoflavones with a 4'-methoxy group on the B-ring, such as formononetin and biochanin A, and on pseudobaptigenin. Has a low activity with daidzein and genistein and no activity with the 7-O-methylated isoflavonoids isoformononetin and prunetin. The polypeptide is Isoflavone 2'-hydroxylase (Medicago truncatula (Barrel medic)).